The chain runs to 81 residues: Cytochrome b559 subunit alpha (81 aa).

Residues 21-35 traverse the membrane as a helical segment; it reads VIHSITIPALFIAGW. Residue histidine 23 coordinates heme.

Belongs to the PsbE/PsbF family. Heterodimer of an alpha subunit and a beta subunit. PSII is composed of 1 copy each of membrane proteins PsbA, PsbB, PsbC, PsbD, PsbE, PsbF, PsbH, PsbI, PsbJ, PsbK, PsbL, PsbM, PsbT, PsbX, PsbY, PsbZ, Psb30/Ycf12, at least 3 peripheral proteins of the oxygen-evolving complex and a large number of cofactors. It forms dimeric complexes. Heme b serves as cofactor.

Its subcellular location is the plastid. It localises to the chloroplast thylakoid membrane. Its function is as follows. This b-type cytochrome is tightly associated with the reaction center of photosystem II (PSII). PSII is a light-driven water:plastoquinone oxidoreductase that uses light energy to abstract electrons from H(2)O, generating O(2) and a proton gradient subsequently used for ATP formation. It consists of a core antenna complex that captures photons, and an electron transfer chain that converts photonic excitation into a charge separation. The sequence is that of Cytochrome b559 subunit alpha from Tetradesmus obliquus (Green alga).